The primary structure comprises 247 residues: L-cystine import ATP-binding protein TcyC (247 aa).

In terms of domain architecture, ABC transporter spans 2–240 (LTVKGLNKSF…PKEERTQRFL (239 aa)). 34–41 (GPSGSGKT) contacts ATP.

This sequence belongs to the ABC transporter superfamily. L-cystine importer (TC 3.A.1.3.14) family. In terms of assembly, the complex is composed of two ATP-binding proteins (TcyC), two transmembrane proteins (TcyB) and a solute-binding protein (TcyA).

It is found in the cell membrane. Part of the ABC transporter complex TcyABC involved in L-cystine import. Responsible for energy coupling to the transport system. The protein is L-cystine import ATP-binding protein TcyC (tcyC) of Bacillus subtilis (strain 168).